We begin with the raw amino-acid sequence, 661 residues long: Potassium voltage-gated channel subfamily KQT member 1 (661 aa).

Disordered stretches follow at residues 1-29 (MAAASTPPRAERKRXSWSRLPGAQRESAG) and 42-88 (ESGP…SLDP). Topologically, residues 1 to 119 (MAAASTPPRA…YNFLERPTGW (119 aa)) are cytoplasmic. S27 is subject to Phosphoserine; by PKA. Pro residues predominate over residues 54-85 (VSPPSAPEPAPPASPASPAPPAADQGPQPPVS). A helical membrane pass occupies residues 120–141 (KCFAYHFTVFLIVLVCLIFSVL). Residues 142 to 152 (STIEQYATLAT) lie on the Extracellular side of the membrane. The helical transmembrane segment at 153 to 175 (GTLFWMEIVLVVFFGTEYVVRLW) threads the bilayer. At 176 to 191 (SAGCRSKYVGLWGRLR) the chain is on the cytoplasmic side. A helical membrane pass occupies residues 192-217 (FARKPISIIDLIVVVASMVVLCVGSK). The Extracellular portion of the chain corresponds to 218 to 225 (GQVFATSA). The chain crosses the membrane as a helical; Voltage-sensor span at residues 226–241 (IRGIRFLQILRMLHVD). An interaction with KCNE3 region spans residues 237 to 245 (MLHVDRQGG). Residues 242–259 (RQGGTWRLLGSVVFIHRQ) lie on the Cytoplasmic side of the membrane. An a 1,2-diacyl-sn-glycero-3-phospho-(1D-myo-inositol-4,5-bisphosphate)-binding site is contributed by Q243. A helical membrane pass occupies residues 260 to 282 (ELITTLYIGFLGLIFSSYFVYLA). The Extracellular segment spans residues 283 to 298 (EKDAVNESGRVEFGSY). An N-linked (GlcNAc...) asparagine glycan is attached at N288. Positions 299 to 319 (ADALWWGVVTVTTIGYGDKVP) form an intramembrane region, pore-forming. Residues 320–321 (QT) lie on the Extracellular side of the membrane. A helical transmembrane segment spans residues 322–347 (WVGKTIASCFSVFAISFFALPAGILG). Topologically, residues 348–661 (SGFALKVQQK…VPRRDPEEGS (314 aa)) are cytoplasmic. The tract at residues 369–381 (AAASLIQTAWRCY) is interaction with CALM. S406 and S408 each carry phosphoserine. The segment at 514–528 (KVIRRMQYFVAKKKF) is interaction with CALM; calcium-dependent. Residues 534–571 (PYDVRDVIEQYSQGHLNLMVRIKELQRRLDQSIGKPSL) form an interaction with KCNE1 C-terminus region. A coiled-coil region spans residues 584-620 (SNSIGARLNRVEDKVTQLDQRLVLIADMLQQLLALHQ). The segment at 587-615 (IGARLNRVEDKVTQLDQRLVLIADMLQQL) is interaction with AKAP9. Positions 588 to 619 (GARLNRVEDKVTQLDQRLVLIADMLQQLLALH) are C-terminal assembly domain (tetramerization). A disordered region spans residues 624–661 (HGGAHPAQARDGDPADPELFLPTYEQLTVPRRDPEEGS).

Belongs to the potassium channel family. KQT (TC 1.A.1.15) subfamily. Kv7.1/KCNQ1 sub-subfamily. In terms of assembly, tetramer. Heterotetramer with KCNE1; targets to the membrane raft. Interacts (via C-terminus) with CALM; forms a heterooctameric structure (with 4:4 KCNQ1:CALM stoichiometry) in a calcium-independent manner. Interacts with AKAP9; targets protein kinase A (PKA) catalytic and regulatory subunits and protein phosphatase 1 (PP1) to the KCNQ1-KCNE1 complex, allowing PKA-mediated phosphorylation and increase of delayed rectifier potassium channel activity. Interacts with KCNE2; form a heterooligomer complex that targets to the membrane raft and leading to currents with an apparently instantaneous activation, a rapid deactivation process and a linear current-voltage relationship and decreases the amplitude of the outward current. Interacts with AP2M1; mediates estrogen-induced internalization via clathrin-coated vesicles. Interacts with NEDD4L; promotes internalization and decreases I(Ks) currents. Interacts with USP2; counteracts the NEDD4L-specific down-regulation of I(Ks) and restore plasma membrane localization. Heterotetramer with KCNQ5; has a voltage-gated potassium channel activity. Interacts with KCNE3; four KCNE3 molecules are bound to one KCNQ1 tetramer (4:4 KCNQ1:KCNE3 stoichiometry); alters membrane raft localization; affects KCNQ1 structure and gating properties. Interacts with KCNE4; impairs KCNQ1 localization in lipid rafts and inhibits voltage-gated potassium channel activity. Interacts with KCNE5; impairs KCNQ1 localization in lipid rafts and only conducts current upon strong and continued depolarization. Interacts with SLC5A3; forms coregulatory channel-transporter complexes that modulate Na(+)-coupled myo-inositol influx through the transporter. In terms of processing, phosphorylation at Ser-27 by PKA; increases delayed rectifier potassium channel activity of the KCNQ1-KCNE1 complex through a macromolecular complex that includes PKA, PP1, and the targeting protein AKAP9. Post-translationally, ubiquitinated by NEDD4L; promotes internalization. The ubiquitinylated form is internalized through a clathrin-mediated endocytosis by interacting with AP2M1 and is recycled back to the cell membrane via RAB4A and RAB11A. Deubiquitinated by USP2; counteracts the NEDD4L-specific down-regulation of I(Ks) and restores the membrane localization.

It is found in the cell membrane. It localises to the cytoplasmic vesicle membrane. The protein localises to the early endosome. The protein resides in the membrane raft. Its subcellular location is the endoplasmic reticulum. It is found in the basolateral cell membrane. It localises to the apical cell membrane. It carries out the reaction K(+)(in) = K(+)(out). With respect to regulation, PIP2 molecule is essential to activate KCNQ channels by inducing the coupling of the voltage-sensing domain (VSD) and the pore-forming domain (PD). Upon channel activation, PIP2 disrupts the VSD-calmodulin/CALM interactions, causing the release of CALM from the VSD which triggers the opening of the gate. Calcium potentiates KCNQ1 channel current through calcium-bound CALM. Calcium-bound CALM competes with PIP2 to stabilize the channel open state. In terms of biological role, pore-forming subunit of the voltage-gated potassium (Kv) channel involved in the regulation of cardiomyocyte excitability and important in normal development and functions of myocardium, inner ear, stomach and colon. Associates with KCNE beta subunits that modulates current kinetics. Induces a voltage-dependent by rapidly activating and slowly deactivating potassium-selective outward current. Also promotes a delayed voltage activated potassium current showing outward rectification characteristic. During beta-adrenergic receptor stimulation participates in cardiac repolarization by associating with KCNE1 to form the I(Ks) cardiac potassium current that increases the amplitude and slows down the activation kinetics of outward potassium current I(Ks). Muscarinic agonist oxotremorine-M strongly suppresses KCNQ1/KCNE1 current. When associated with KCNE3, forms the potassium channel that is important for cyclic AMP-stimulated intestinal secretion of chloride ions. This interaction with KCNE3 is reduced by 17beta-estradiol, resulting in the reduction of currents. During conditions of increased substrate load, maintains the driving force for proximal tubular and intestinal sodium ions absorption, gastric acid secretion, and cAMP-induced jejunal chloride ions secretion. Allows the provision of potassium ions to the luminal membrane of the secretory canaliculus in the resting state as well as during stimulated acid secretion. When associated with KCNE2, forms a heterooligomer complex leading to currents with an apparently instantaneous activation, a rapid deactivation process and a linear current-voltage relationship and decreases the amplitude of the outward current. When associated with KCNE4, inhibits voltage-gated potassium channel activity. When associated with KCNE5, this complex only conducts current upon strong and continued depolarization. Also forms a heterotetramer with KCNQ5 that has a voltage-gated potassium channel activity. Binds with phosphatidylinositol 4,5-bisphosphate. KCNQ1-KCNE2 channel associates with Na(+)-coupled myo-inositol symporter in the apical membrane of choroid plexus epithelium and regulates the myo-inositol gradient between blood and cerebrospinal fluid with an impact on neuron excitability. The chain is Potassium voltage-gated channel subfamily KQT member 1 from Oryctolagus cuniculus (Rabbit).